The primary structure comprises 308 residues: MNHFLDIHLTDPADLREIIDQAAIMKSARKGRPRGAPDDTQPLKDRIVALIFEKPSTRTRVSFDVGVRQMGGQTMVLSGADMQLGHGETIADTARVLSRYVDLIMIRTFDEAVLTEMAEFATVPVINGLTDRTHPCQIMADILTFEEHRGPIAGKKVVWSGDGNNVCASFLHAAGQFGFDLTFTGPQTLDPDAEFVELARSKGVNVAVERDPAKAVEGADLVVTDTWVSMHDAQSARERRHNQLRPYRVDAALMSRAKPEALFMHCLPAHRDDEATSEVMDGPQSVIFDEAENRLHAQKAIMRWCLAV.

Residues 56-59, Q83, R107, and 134-137 contribute to the carbamoyl phosphate site; these read STRT and HPCQ. L-ornithine contacts are provided by residues N165, D225, and 229–230; that span reads SM. Carbamoyl phosphate contacts are provided by residues 266 to 267 and R294; that span reads CL.

The protein belongs to the aspartate/ornithine carbamoyltransferase superfamily. OTCase family.

It localises to the cytoplasm. The enzyme catalyses carbamoyl phosphate + L-ornithine = L-citrulline + phosphate + H(+). The protein operates within amino-acid biosynthesis; L-arginine biosynthesis; L-arginine from L-ornithine and carbamoyl phosphate: step 1/3. In terms of biological role, reversibly catalyzes the transfer of the carbamoyl group from carbamoyl phosphate (CP) to the N(epsilon) atom of ornithine (ORN) to produce L-citrulline. The polypeptide is Ornithine carbamoyltransferase (Roseobacter denitrificans (strain ATCC 33942 / OCh 114) (Erythrobacter sp. (strain OCh 114))).